A 199-amino-acid chain; its full sequence is Octanoyltransferase (199 aa).

Positions 27-199 (SNSYDELWLL…FVQYFLTQFK (173 aa)) constitute a BPL/LPL catalytic domain. Substrate contacts are provided by residues 66-73 (RGGQVTYH), 133-135 (SIG), and 146-148 (GIA). Cysteine 164 serves as the catalytic Acyl-thioester intermediate.

It belongs to the LipB family.

It is found in the cytoplasm. It carries out the reaction octanoyl-[ACP] + L-lysyl-[protein] = N(6)-octanoyl-L-lysyl-[protein] + holo-[ACP] + H(+). Its pathway is protein modification; protein lipoylation via endogenous pathway; protein N(6)-(lipoyl)lysine from octanoyl-[acyl-carrier-protein]: step 1/2. Its function is as follows. Catalyzes the transfer of endogenously produced octanoic acid from octanoyl-acyl-carrier-protein onto the lipoyl domains of lipoate-dependent enzymes. Lipoyl-ACP can also act as a substrate although octanoyl-ACP is likely to be the physiological substrate. This is Octanoyltransferase from Legionella pneumophila (strain Lens).